We begin with the raw amino-acid sequence, 262 residues long: (5R,7aS)-5-hydroxy-7a-methyl-1-oxo-2,3,5,6,7,7a-hexahydro-1H-indene-carboxyl-CoA reductase (262 aa).

NAD(+)-binding residues include D50, D77, V78, N104, Y170, K174, and A203. Catalysis depends on Y170, which acts as the Proton acceptor.

The protein belongs to the short-chain dehydrogenases/reductases (SDR) family.

The catalysed reaction is (5R,7aS)-5-hydroxy-7a-methyl-1-oxo-2,3,5,6,7,7a-hexahydro-1H-indene-carboxyl-CoA + NAD(+) = (7aS)-7a-methyl-1,5-dioxo-2,3,5,6,7,7a-hexahydro-1H-indene-carboxyl-CoA + NADH + H(+). It functions in the pathway steroid metabolism; cholesterol degradation. Its activity is regulated as follows. Requires the presence of IpdC. Involved in the final steps of cholesterol and steroid degradation. Probably catalyzes the oxidation of the 5-OH group of (5R,7aS)-5-hydroxy-7a-methyl-1-oxo-2,3,5,6,7,7a-hexahydro-1H-indene-carboxyl-CoA, leading to the formation of HIEC-CoA. The polypeptide is (5R,7aS)-5-hydroxy-7a-methyl-1-oxo-2,3,5,6,7,7a-hexahydro-1H-indene-carboxyl-CoA reductase (Mycobacterium tuberculosis (strain ATCC 25618 / H37Rv)).